A 388-amino-acid chain; its full sequence is Succinate--CoA ligase [ADP-forming] subunit beta (388 aa).

The 236-residue stretch at lysine 9–glutamate 244 folds into the ATP-grasp domain. ATP contacts are provided by residues lysine 46, glycine 53–glycine 55, glutamate 99, alanine 102, and glutamate 107. Residues asparagine 199 and aspartate 213 each coordinate Mg(2+). Substrate-binding positions include asparagine 264 and glycine 321–methionine 323.

Belongs to the succinate/malate CoA ligase beta subunit family. In terms of assembly, heterotetramer of two alpha and two beta subunits. Mg(2+) serves as cofactor.

It catalyses the reaction succinate + ATP + CoA = succinyl-CoA + ADP + phosphate. The enzyme catalyses GTP + succinate + CoA = succinyl-CoA + GDP + phosphate. It functions in the pathway carbohydrate metabolism; tricarboxylic acid cycle; succinate from succinyl-CoA (ligase route): step 1/1. In terms of biological role, succinyl-CoA synthetase functions in the citric acid cycle (TCA), coupling the hydrolysis of succinyl-CoA to the synthesis of either ATP or GTP and thus represents the only step of substrate-level phosphorylation in the TCA. The beta subunit provides nucleotide specificity of the enzyme and binds the substrate succinate, while the binding sites for coenzyme A and phosphate are found in the alpha subunit. This chain is Succinate--CoA ligase [ADP-forming] subunit beta, found in Ralstonia nicotianae (strain ATCC BAA-1114 / GMI1000) (Ralstonia solanacearum).